Here is a 309-residue protein sequence, read N- to C-terminus: Assembly-complementing factor 4 (309 aa).

Disordered stretches follow at residues 1–80, 164–240, and 286–309; these read MSED…ASPI, KSIN…ENTP, and VRSE…LFKR. Basic and acidic residues-rich tracts occupy residues 13 to 24 and 34 to 44; these read ELHKLSIVDKHS and KQHEVQPESKS. Serine 44, serine 71, serine 74, serine 78, and serine 165 each carry phosphoserine. Polar residues predominate over residues 61-80; that stretch reads SSPQRSTTNQSPVSDHASPI. Composition is skewed to low complexity over residues 174 to 188, 205 to 214, and 222 to 239; these read NNNV…LPNR, PSRSSESTPT, and PRNT…GENT. Acidic residues predominate over residues 287-298; it reads RSEDEDDEEFEP. At serine 288 the chain carries Phosphoserine.

Its function is as follows. May be involved in actin cytoskeleton organization and biogenesis. The polypeptide is Assembly-complementing factor 4 (ACF4) (Saccharomyces cerevisiae (strain ATCC 204508 / S288c) (Baker's yeast)).